A 261-amino-acid polypeptide reads, in one-letter code: Ribosomal RNA small subunit methyltransferase A (261 aa).

Residues H12, L14, G39, E60, D81, and N104 each coordinate S-adenosyl-L-methionine.

This sequence belongs to the class I-like SAM-binding methyltransferase superfamily. rRNA adenine N(6)-methyltransferase family. RsmA subfamily.

The protein resides in the cytoplasm. It carries out the reaction adenosine(1518)/adenosine(1519) in 16S rRNA + 4 S-adenosyl-L-methionine = N(6)-dimethyladenosine(1518)/N(6)-dimethyladenosine(1519) in 16S rRNA + 4 S-adenosyl-L-homocysteine + 4 H(+). Specifically dimethylates two adjacent adenosines (A1518 and A1519) in the loop of a conserved hairpin near the 3'-end of 16S rRNA in the 30S particle. May play a critical role in biogenesis of 30S subunits. This Albidiferax ferrireducens (strain ATCC BAA-621 / DSM 15236 / T118) (Rhodoferax ferrireducens) protein is Ribosomal RNA small subunit methyltransferase A.